Here is a 623-residue protein sequence, read N- to C-terminus: UvrABC system protein C (623 aa).

Positions 13-92 (DKPGVYIMKN…IKKYKPRYNI (80 aa)) constitute a GIY-YIG domain. Residues 204-239 (NDIIRELKEEMEKASMNLDFEKAADLRDKMLAAQKV) form the UVR domain.

Belongs to the UvrC family. As to quaternary structure, interacts with UvrB in an incision complex.

The protein resides in the cytoplasm. Its function is as follows. The UvrABC repair system catalyzes the recognition and processing of DNA lesions. UvrC both incises the 5' and 3' sides of the lesion. The N-terminal half is responsible for the 3' incision and the C-terminal half is responsible for the 5' incision. The polypeptide is UvrABC system protein C (Clostridium acetobutylicum (strain ATCC 824 / DSM 792 / JCM 1419 / IAM 19013 / LMG 5710 / NBRC 13948 / NRRL B-527 / VKM B-1787 / 2291 / W)).